The primary structure comprises 255 residues: Alkaline ceramidase (255 aa).

Topologically, residues 1-28 are lumenal; that stretch reads MADGISSFWGPVTSTIECCEMNYAYSSY. Residues 29–49 traverse the membrane as a helical segment; that stretch reads IAEFYNTISNVPGILLALIGL. At 50–60 the chain is on the cytoplasmic side; the sequence is VNALRQRFEKR. The chain crosses the membrane as a helical span at residues 61-81; that stretch reads FSILHISNMILAIGSMLYHAT. His79 lines the Zn(2+) pocket. Residues 82-91 are Lumenal-facing; it reads LQHVQQQSDE. The helical transmembrane segment at 92-112 threads the bilayer; sequence TPMVWEILLYMYILYSPDWHY. Over 113–118 the chain is Cytoplasmic; that stretch reads RSTMPT. 2 helical membrane-spanning segments follow: residues 119–139 and 140–160; these read FLFLYGAAFAIVHAYLRFGIG and FKVHYVILCLLCIPRMYKYYI. Residues 161–169 are Cytoplasmic-facing; sequence HTEDTAAKR. A helical transmembrane segment spans residues 170–192; it reads IAKWYVATILVGSICWFCDRVFC. The Lumenal portion of the chain corresponds to 193 to 205; sequence KTISQWPVNPQGH. Positions 205 and 209 each coordinate Zn(2+). Residues 206–226 traverse the membrane as a helical segment; that stretch reads ALWHVFMSFNSYCANTFLMFC. Residues 227–255 are Cytoplasmic-facing; the sequence is RAQQRGWNPKVKYFLGVLPYVKIEKPKTQ.

It belongs to the alkaline ceramidase family. It depends on Zn(2+) as a cofactor. Mostly expressed in roots, shoot meristems and pollen, and, to a lower extent, in mature leaves.

The protein localises to the endoplasmic reticulum membrane. Its subcellular location is the golgi apparatus membrane. In terms of biological role, hydrolyzes only phytoceramide into phytosphingosine and free fatty acid. Does not have reverse activity. Affects plant morphogenesis. Required for the formation of wax layer that ensure cuticle permeability. Implicated in abscisic acid (ABA)-mediated stomatal closure. Involved in both biotic and abiotic stresses. Promotes salt resistance and defenses responses toward pathogenic bacteria (e.g. P.syringae) and against the fungal toxin fumonisin B1 (FB1). The sequence is that of Alkaline ceramidase from Arabidopsis thaliana (Mouse-ear cress).